The sequence spans 284 residues: NAD kinase (284 aa).

Asp-60 acts as the Proton acceptor in catalysis. NAD(+)-binding positions include 60–61 (DG), 134–135 (NE), Arg-145, Lys-162, Asp-164, 175–180 (TAYSFS), and Gln-234.

It belongs to the NAD kinase family. Requires a divalent metal cation as cofactor.

It is found in the cytoplasm. The enzyme catalyses NAD(+) + ATP = ADP + NADP(+) + H(+). Its function is as follows. Involved in the regulation of the intracellular balance of NAD and NADP, and is a key enzyme in the biosynthesis of NADP. Catalyzes specifically the phosphorylation on 2'-hydroxyl of the adenosine moiety of NAD to yield NADP. The polypeptide is NAD kinase (Clostridium botulinum (strain Eklund 17B / Type B)).